The following is a 334-amino-acid chain: Protein FAM50B (334 aa).

A2 is subject to N-acetylalanine. Positions 122–175 are disordered; that stretch reads FTLDEEEGDQEDSRQAESAEAHSAGAKKNLGKNPDVDTSFLPDREREEEENRLR. Composition is skewed to basic and acidic residues over residues 132-141 and 163-175; these read EDSRQAESAE and PDRE…NRLR.

Belongs to the FAM50 family. As to expression, widely expressed. Abundant in testis, where it is expressed in seminiferous tubules, not in the interstitium. At the cellular level, expressed in primary spermatocytes and round spermatids, but not detectable in spermatogonia, elongating spermatids, mature spermatozoa, Sertoli cells or Leydig cells.

This Mus musculus (Mouse) protein is Protein FAM50B (Fam50b).